The sequence spans 402 residues: MFPMSSTSRSSAANNRKDPPRKKNKETPSPVTREPTSIDSLPNDLLLNCFARVSRMYYPALSRVSKRFRSIVTSPEIYNTRSLLNRTEKCLYLCLRFPFDNNTHWFTLYQNPNRTVSDKVFLQIPSPQYPLTLSSNLVAVGSNIYRIGGTVGDDSCPLGFDREPSSKVSILDCRSHTWRDGPRMRLNRRSSTTSVVDGKIYVTGGTEDTDNPSHWIEVFDPKTQSWGTVTNPHIVKVWEEVCYRRAVKSIGHDGKLYLSGDKYVVYDPDEGKWNSVEEHWLIGYAIGSSNCVVDNILFYWDQGVFKWYDSKVSSWKQLKGLEGLPDDFSQREYCKLVDLGGKMAVLWDKWEYSGVCMIFCAEISLEKRDGDEIWGKVEWFDTVLEVGASCSLKSADALSASV.

A compositionally biased stretch (low complexity) spans 1–14; the sequence is MFPMSSTSRSSAAN. The disordered stretch occupies residues 1 to 37; that stretch reads MFPMSSTSRSSAANNRKDPPRKKNKETPSPVTREPTS. Residues 27 to 37 are compositionally biased toward polar residues; that stretch reads TPSPVTREPTS. Residues 35 to 81 enclose the F-box domain; that stretch reads PTSIDSLPNDLLLNCFARVSRMYYPALSRVSKRFRSIVTSPEIYNTR. 4 Kelch repeats span residues 143-198, 199-246, 255-300, and 302-341; these read NIYR…VVDG, KIYV…YRRA, KLYL…LFYW, and QGVFKWYDSKVSSWKQLKGLEGLPDDFSQREYCKLVDLGG.

The protein is F-box/kelch-repeat protein At4g39590 of Arabidopsis thaliana (Mouse-ear cress).